The primary structure comprises 83 residues: MKIMQVEKTLVSTNRIADMGHKPLLVVWEKPGAPRQVAVDAIGCIPGDWVLCVGSSAAREAAGSKSYPSDLTIIGIIDQWNGE.

In terms of domain architecture, BMV spans 1-78 (MKIMQVEKTL…SDLTIIGIID (78 aa)).

Belongs to the CcmL/EutN family. CsoS4 subfamily. Homopentamer.

The protein localises to the carboxysome. Probably forms vertices in the carboxysome, a polyhedral inclusion where RuBisCO (ribulose bisphosphate carboxylase, cbbL-cbbS) is sequestered. Has been modeled to induce curvature upon insertion into an otherwise flat hexagonal layer of major carboxysome subunits. A minor shell protein, only 12 pentamers of CsoS4A/CsoS4B are calculated to be present in each carboxysome. The 2 CsoS4 proteins contribute to the impermeability of the carboxysome to CO(2). Its function is as follows. Unlike beta-carboxysomes, alpha-carboxysomes (Cb) can form without cargo protein. CsoS2 is essential for Cb formation and is also capable of targeting foreign proteins to the Cb. The Cb shell assembles with the aid of CsoS2; CsoS1A, CsoS1B and CsoS1C form the majority of the shell while CsoS4A and CsoS4B form vertices. CsoS1D forms pseudohexamers that probably control metabolite flux into and out of the shell. This is Carboxysome shell vertex protein CsoS4A from Halothiobacillus neapolitanus (strain ATCC 23641 / c2) (Thiobacillus neapolitanus).